Here is a 467-residue protein sequence, read N- to C-terminus: Acyl-lipid (8-3)-desaturase B (467 aa).

The 78-residue stretch at 12-89 (LKLYTWDEVS…IKQYEIGYIS (78 aa)) folds into the Cytochrome b5 heme-binding domain. Residues His-47 and His-70 each coordinate heme. Helical transmembrane passes span 123–143 (VSVGVFTRMVLIYLFLFVTYY) and 152–172 (FWLNCIFAVLYGVANSLFGLH). Positions 175-179 (HDACH) match the Histidine box-1 motif. Residues 187–207 (MTWKILGATFDLFAGASFYAW) traverse the membrane as a helical segment. Residues 211–216 (HVIGHH) carry the Histidine box-2 motif. 2 helical membrane-spanning segments follow: residues 293–313 (AIFILGKLVFIISRFILPLIY) and 317–337 (FSHLICFFLISELVLGWYLAI). A Histidine box-3 motif is present at residues 400-404 (QVIHH).

It belongs to the fatty acid desaturase type 1 family. The cofactor is Fe(2+).

It localises to the membrane. The enzyme catalyses an (8Z,11Z,14Z)-icosatrienoyl-containing glycerolipid + 2 Fe(II)-[cytochrome b5] + O2 + 2 H(+) = (5Z,8Z,11Z,14Z)-eicosatetraenoyl-containing glycerolipid + 2 Fe(III)-[cytochrome b5] + 2 H2O. It carries out the reaction an (8Z,11Z,14Z,17Z)-eicosatetraenoyl-containing glycerolipid + 2 Fe(II)-[cytochrome b5] + O2 + 2 H(+) = a (5Z,8Z,11Z,14Z,17Z)-eicosapentaenoyl-containing glycerolipid + 2 Fe(III)-[cytochrome b5] + 2 H2O. Fatty acid desaturase that introduces a cis double bond at the 5-position in 18-carbon polyunsaturated fatty acids. This is Acyl-lipid (8-3)-desaturase B (fadB) from Dictyostelium discoideum (Social amoeba).